Here is a 390-residue protein sequence, read N- to C-terminus: Na(+)/H(+) antiporter NhaA 2 (390 aa).

11 helical membrane-spanning segments follow: residues 23–43 (IVLIACAALALLIANSPLAAA), 63–83 (LHLWINDGLMAVFFFVVGLEI), 100–120 (LPVLAAVAGMAVPALIYLAIT), 129–149 (GWAIPSATDIAFAIGVLALVG), 158–178 (LFLLTVAIVDDLGAVVVIALF), 181–201 (SGLKLAWLGASALILAALVLV), 208–228 (ALLPYLAGAVALWYTVLHSGI), 265–285 (GFVIVPLFGLANAGVALGADF), 293–313 (LGIAMGLLLGKQFGILGSILV), 331–351 (LWGIALLCGIGFTMSLFIAGL), and 362–382 (EAKLGILGGSLVSALAGLLVL).

Belongs to the NhaA Na(+)/H(+) (TC 2.A.33) antiporter family.

It is found in the cell inner membrane. The enzyme catalyses Na(+)(in) + 2 H(+)(out) = Na(+)(out) + 2 H(+)(in). Functionally, na(+)/H(+) antiporter that extrudes sodium in exchange for external protons. The protein is Na(+)/H(+) antiporter NhaA 2 of Novosphingobium aromaticivorans (strain ATCC 700278 / DSM 12444 / CCUG 56034 / CIP 105152 / NBRC 16084 / F199).